The sequence spans 342 residues: S-adenosylmethionine:tRNA ribosyltransferase-isomerase (342 aa).

Belongs to the QueA family. As to quaternary structure, monomer.

It localises to the cytoplasm. The catalysed reaction is 7-aminomethyl-7-carbaguanosine(34) in tRNA + S-adenosyl-L-methionine = epoxyqueuosine(34) in tRNA + adenine + L-methionine + 2 H(+). The protein operates within tRNA modification; tRNA-queuosine biosynthesis. Transfers and isomerizes the ribose moiety from AdoMet to the 7-aminomethyl group of 7-deazaguanine (preQ1-tRNA) to give epoxyqueuosine (oQ-tRNA). This is S-adenosylmethionine:tRNA ribosyltransferase-isomerase from Streptococcus agalactiae serotype V (strain ATCC BAA-611 / 2603 V/R).